The primary structure comprises 223 residues: Probable cytokinin riboside 5'-monophosphate phosphoribohydrolase LOGL1 (223 aa).

Residues Glu-89, 107 to 108 (RK), 124 to 130 (GYGTMEE), and Thr-136 contribute to the substrate site. A disordered region spans residues 201-223 (QEVAPRTSWEMSELGYGKTPEES).

The protein belongs to the LOG family. Expressed in shoot apex, immature inflorescences and flowers.

It catalyses the reaction N(6)-(dimethylallyl)adenosine 5'-phosphate + H2O = N(6)-dimethylallyladenine + D-ribose 5-phosphate. The enzyme catalyses 9-ribosyl-trans-zeatin 5'-phosphate + H2O = trans-zeatin + D-ribose 5-phosphate. Functionally, cytokinin-activating enzyme working in the direct activation pathway. Phosphoribohydrolase that converts inactive cytokinin nucleotides to the biologically active free-base forms. This Oryza sativa subsp. japonica (Rice) protein is Probable cytokinin riboside 5'-monophosphate phosphoribohydrolase LOGL1 (LOGL1).